Reading from the N-terminus, the 122-residue chain is Acidic phospholipase A2 (122 aa).

Disulfide bonds link C26-C115, C28-C44, C43-C95, C49-C122, C50-C88, C57-C81, and C75-C86. Ca(2+) is bound by residues Y27, G29, and G31. H47 is an active-site residue. D48 serves as a coordination point for Ca(2+). D89 is a catalytic residue.

The protein belongs to the phospholipase A2 family. Group II subfamily. D49 sub-subfamily. Ca(2+) serves as cofactor. In terms of processing, contains 7 disulfide bonds. Expressed by the venom gland.

It localises to the secreted. The catalysed reaction is a 1,2-diacyl-sn-glycero-3-phosphocholine + H2O = a 1-acyl-sn-glycero-3-phosphocholine + a fatty acid + H(+). Its function is as follows. Snake venom phospholipase A2 (PLA2) that displays low systemic toxicity and causes severe symptoms only at very high concentrations (15 mg/kg). Has neither coagulant nor anticoagulant activity. PLA2 catalyzes the calcium-dependent hydrolysis of the 2-acyl groups in 3-sn-phosphoglycerides. The sequence is that of Acidic phospholipase A2 from Bothrops ammodytoides (Yararanata).